The chain runs to 84 residues: Large ribosomal subunit protein bL27 (84 aa).

A disordered region spans residues 1 to 25 (MSHKKAGGSTRNGRDSNAQRRGVKK).

This sequence belongs to the bacterial ribosomal protein bL27 family.

This chain is Large ribosomal subunit protein bL27, found in Desulforapulum autotrophicum (strain ATCC 43914 / DSM 3382 / VKM B-1955 / HRM2) (Desulfobacterium autotrophicum).